The sequence spans 731 residues: Alpha-catulin (731 aa).

Phosphoserine is present on residues Ser-373 and Ser-537. Residues 535 to 559 (HLSLPKPTKNSANLKSLKPDKPDSE) are disordered.

Belongs to the vinculin/alpha-catenin family. In terms of assembly, interacts with ARHGEF1. Interacts with Dtna. The interaction is required for correct localization of both Ctnnal1 and Dtna.

The protein resides in the cytoplasm. Its subcellular location is the cytoskeleton. The protein localises to the cell membrane. May modulate the Rho pathway signaling by providing a scaffold for the Lbc Rho guanine nucleotide exchange factor (ARHGEF1). This is Alpha-catulin (Ctnnal1) from Mus musculus (Mouse).